Reading from the N-terminus, the 1452-residue chain is CLIP-associating protein 1 (1452 aa).

HEAT repeat units follow at residues leucine 68–serine 87, glutamine 88–asparagine 124, and leucine 163–glutamate 200. The segment at lysine 239–valine 299 is disordered. Residues serine 253 to alanine 267 show a composition bias toward low complexity. 2 HEAT repeats span residues histidine 407 to threonine 442 and histidine 443 to threonine 479. Disordered stretches follow at residues serine 545 to glutamine 735 and tyrosine 771 to tyrosine 792. Residues serine 550–leucine 569 show a composition bias toward low complexity. A compositionally biased stretch (polar residues) spans arginine 573 to arginine 597. Low complexity-rich tracts occupy residues alanine 606–alanine 621, glutamine 645–aspartate 659, and valine 668–glycine 682. Over residues glutamine 715–serine 724 the composition is skewed to polar residues. Low complexity predominate over residues serine 781–tyrosine 792. One copy of the HEAT 6 repeat lies at glutamine 926–proline 963. The segment at leucine 1033–proline 1076 is disordered. Residues lysine 1034–asparagine 1046 are compositionally biased toward low complexity. The segment covering serine 1058–serine 1070 has biased composition (polar residues). 2 HEAT repeats span residues glutamate 1256–alanine 1293 and glutamine 1374–glutamate 1411.

Belongs to the CLASP family. In terms of assembly, interacts (via C-terminus) with clip1/clip-170, and cenpe.

Its subcellular location is the cytoplasm. It localises to the cytoskeleton. The protein resides in the microtubule organizing center. The protein localises to the centrosome. It is found in the chromosome. Its subcellular location is the centromere. It localises to the kinetochore. The protein resides in the spindle. The protein localises to the golgi apparatus. It is found in the trans-Golgi network. Its function is as follows. Microtubule plus-end tracking protein that promotes the stabilization of dynamic microtubules during anaphase. Plays a crucial role in chromatin-induced microtubule formation. May also act at microtubule minus ends. May be involved in the nucleation of noncentrosomal microtubules originating from the trans-Golgi network (TGN). This is CLIP-associating protein 1 from Xenopus tropicalis (Western clawed frog).